A 361-amino-acid polypeptide reads, in one-letter code: Putative agmatine deiminase (361 aa).

C354 acts as the Amidino-cysteine intermediate in catalysis.

This sequence belongs to the agmatine deiminase family.

The catalysed reaction is agmatine + H2O = N-carbamoylputrescine + NH4(+). This Streptococcus pneumoniae (strain Taiwan19F-14) protein is Putative agmatine deiminase.